A 192-amino-acid polypeptide reads, in one-letter code: Photosystem I assembly protein Ycf4 (192 aa).

The next 2 membrane-spanning stretches (helical) occupy residues 30–52 (YFWATAVSIGGLGFFLAGLSSYL) and 72–94 (IAIGFYGVAALLLATYLWLAIAW).

Belongs to the Ycf4 family.

It localises to the cellular thylakoid membrane. Seems to be required for the assembly of the photosystem I complex. The sequence is that of Photosystem I assembly protein Ycf4 from Thermosynechococcus vestitus (strain NIES-2133 / IAM M-273 / BP-1).